Reading from the N-terminus, the 45-residue chain is Large ribosomal subunit protein bL34 (45 aa).

The segment at 1 to 24 is disordered; sequence MTKRTFGGTSRKRKRVSGFRVRMR. Positions 10–24 are enriched in basic residues; that stretch reads SRKRKRVSGFRVRMR.

The protein belongs to the bacterial ribosomal protein bL34 family.

This Prochlorococcus marinus (strain MIT 9303) protein is Large ribosomal subunit protein bL34.